Consider the following 347-residue polypeptide: Protein RecA (347 aa).

66 to 73 contacts ATP; sequence GPESSGKT.

This sequence belongs to the RecA family.

It localises to the cytoplasm. Its function is as follows. Can catalyze the hydrolysis of ATP in the presence of single-stranded DNA, the ATP-dependent uptake of single-stranded DNA by duplex DNA, and the ATP-dependent hybridization of homologous single-stranded DNAs. It interacts with LexA causing its activation and leading to its autocatalytic cleavage. This Allochromatium vinosum (Chromatium vinosum) protein is Protein RecA.